Reading from the N-terminus, the 318-residue chain is Magnetosome protein MamM (318 aa).

A transmembrane domain (TMD) region spans residues Met1–Asp210. 4 consecutive transmembrane segments (helical) span residues Ile13–Leu33, Ala39–Ile59, Phe81–His101, and Leu117–Ser137. A C-terminal domain (CTD) region spans residues His211 to Asn318. Fe cation is bound by residues Asp249, His264, His285, and Glu289.

Belongs to the cation diffusion facilitator (CDF) transporter (TC 2.A.4) family. Forms homodimers via its C-terminal domain (CTD) in the presence of metal cations. Interacts with MamB via their CTD.

The protein resides in the magnetosome membrane. It localises to the cell inner membrane. In terms of biological role, probably plays a role in biomineralization. Required for stable accumulation of MamB. Probably binds and transports iron. May nucleate iron crystal formation. The chain is Magnetosome protein MamM (mamM) from Paramagnetospirillum magneticum (strain ATCC 700264 / AMB-1) (Magnetospirillum magneticum).